A 152-amino-acid chain; its full sequence is Isoquinoline 1-oxidoreductase subunit alpha (152 aa).

One can recognise a 2Fe-2S ferredoxin-type domain in the interval 1–77; sequence MIEFILNGQP…RQSVTTIEGL (77 aa). [2Fe-2S] cluster-binding residues include Cys39, Cys44, and Cys47.

Heterodimer of an alpha chain and a beta chain.

The catalysed reaction is isoquinoline + A + H2O = isoquinolin-1(2H)-one + AH2. Functionally, specific towards N-containing N-heterocyclic substrates, including isoquinoline, isoquinolin-5-ol, phthalazine and quinazoline. The polypeptide is Isoquinoline 1-oxidoreductase subunit alpha (iorA) (Brevundimonas diminuta (Pseudomonas diminuta)).